The sequence spans 304 residues: Porphobilinogen deaminase (304 aa).

Position 240 is an S-(dipyrrolylmethanemethyl)cysteine (Cys240).

Belongs to the HMBS family. Monomer. It depends on dipyrromethane as a cofactor.

The enzyme catalyses 4 porphobilinogen + H2O = hydroxymethylbilane + 4 NH4(+). It functions in the pathway porphyrin-containing compound metabolism; protoporphyrin-IX biosynthesis; coproporphyrinogen-III from 5-aminolevulinate: step 2/4. Its function is as follows. Tetrapolymerization of the monopyrrole PBG into the hydroxymethylbilane pre-uroporphyrinogen in several discrete steps. The chain is Porphobilinogen deaminase from Xanthomonas axonopodis pv. citri (strain 306).